We begin with the raw amino-acid sequence, 317 residues long: MTTTQKHDLFTPEPHYVPGYAGFFPQLRYQVGNTYGRTTGQLLTDPSVQKSPCSVLSPMSKPKFIEDFSQSKPPRVPCQDLTEPYIPHYTSLKPSKNFEILGQLPPLEVDAQEPPGVENIPRQILLPAGFTPDTPHPPCPPGRKGDSRDLGHPVYGEEAWKSATPVCEAPRQHQLYHCQRDEYPPPARRQQETLDVGSFQRLPQLDHPNLIQRKAISGYAGFIPRFTWVMGLNYRDGVMQAMDEFDKSQFLFRNPHCDLGEKLPGTHWPSNHIYSSQGLIPFYMGFIPAMQDNYALTFGNSTRRAYWKEWAKRNHTL.

The tract at residues 131–153 (TPDTPHPPCPPGRKGDSRDLGHP) is disordered.

It belongs to the CIMIP2 family. Microtubule inner protein component of sperm flagellar doublet microtubules.

It is found in the cytoplasm. The protein resides in the cytoskeleton. The protein localises to the flagellum axoneme. Its function is as follows. Microtubule inner protein (MIP) part of the dynein-decorated doublet microtubules (DMTs) in flagellum axoneme. Binds to the intra-tubulin interfaces. The protein is Ciliary microtubule inner protein 2A of Homo sapiens (Human).